Reading from the N-terminus, the 341-residue chain is Fructose-1,6-bisphosphatase, cytosolic (341 aa).

Glu71, Glu100, Asp121, Leu123, and Asp124 together coordinate Mg(2+). Substrate-binding positions include Asp124 to Ser127, Asn215, Tyr247, Tyr267, and Lys277. Residue Glu283 coordinates Mg(2+).

It belongs to the FBPase class 1 family. It depends on Mg(2+) as a cofactor.

It localises to the cytoplasm. It catalyses the reaction beta-D-fructose 1,6-bisphosphate + H2O = beta-D-fructose 6-phosphate + phosphate. The chain is Fructose-1,6-bisphosphatase, cytosolic from Beta vulgaris (Sugar beet).